A 437-amino-acid polypeptide reads, in one-letter code: Serine--tRNA ligase (437 aa).

227–229 (TAE) lines the L-serine pocket. Residues 258 to 260 (RSE) and Val274 each bind ATP. Glu281 is an L-serine binding site. 347–350 (ETHS) is a binding site for ATP. Thr382 lines the L-serine pocket.

This sequence belongs to the class-II aminoacyl-tRNA synthetase family. Type-1 seryl-tRNA synthetase subfamily. In terms of assembly, homodimer. The tRNA molecule binds across the dimer.

The protein localises to the cytoplasm. The catalysed reaction is tRNA(Ser) + L-serine + ATP = L-seryl-tRNA(Ser) + AMP + diphosphate + H(+). The enzyme catalyses tRNA(Sec) + L-serine + ATP = L-seryl-tRNA(Sec) + AMP + diphosphate + H(+). The protein operates within aminoacyl-tRNA biosynthesis; selenocysteinyl-tRNA(Sec) biosynthesis; L-seryl-tRNA(Sec) from L-serine and tRNA(Sec): step 1/1. Catalyzes the attachment of serine to tRNA(Ser). Is also able to aminoacylate tRNA(Sec) with serine, to form the misacylated tRNA L-seryl-tRNA(Sec), which will be further converted into selenocysteinyl-tRNA(Sec). The chain is Serine--tRNA ligase from Deinococcus geothermalis (strain DSM 11300 / CIP 105573 / AG-3a).